The chain runs to 527 residues: MSDTRTAAMTSKAWPFEEARRVLKRYEKNPPEKGYVLFETGYGPSGLPHIGTFGEVARTSMVMRAFQEISDIPTRLICFSDDLDGMRKVPGNVPNPDALTEHLQRPLTSVPDPFGTHASFGAHNNAMLRRFLDTFGFEYEFISATEFYNTGQFDEILLRAAAKYDEIMAVMLKSLREERRQTYSIFLPIHPESGRVMYVPMKEVNAQAGTITFDSEDGEEMTLPVTGGAVKLQWKPDFGARWAALGVDFEMYGKDHSTNTPIYDKICRILGQRPPEHFTYELFLDENGQKISKSSGNGVSIDEWLTYASTESLSYFMYQKPKTAKRMYFDVIPKAVDEYHQQLRAYAGQDTAQRLNNPVWHIHGGDVPASNMLVPFSMLLNLASVSSAEDKSQLWGFIQRYAPESNPENNPDMDAAADFAVRYFNDFVKPKKVYRAASDLEREALEDLRDQLKAYDGPVDDEALQSIVYACGRERFDPLRGWFTALYEVLLGASQGPRFGGFIALYGVQETVALIDAALAGELLSDD.

Residues 44–52 (PSGLPHIGT) carry the 'HIGH' region motif. Positions 290 to 294 (KISKS) match the 'KMSKS' region motif. Lysine 293 serves as a coordination point for ATP.

It belongs to the class-I aminoacyl-tRNA synthetase family.

It is found in the cytoplasm. It carries out the reaction tRNA(Lys) + L-lysine + ATP = L-lysyl-tRNA(Lys) + AMP + diphosphate. The sequence is that of Lysine--tRNA ligase from Roseobacter denitrificans (strain ATCC 33942 / OCh 114) (Erythrobacter sp. (strain OCh 114)).